Consider the following 290-residue polypeptide: 33 kDa chaperonin (290 aa).

2 cysteine pairs are disulfide-bonded: Cys-235-Cys-237 and Cys-268-Cys-271.

This sequence belongs to the HSP33 family. Post-translationally, under oxidizing conditions two disulfide bonds are formed involving the reactive cysteines. Under reducing conditions zinc is bound to the reactive cysteines and the protein is inactive.

It localises to the cytoplasm. Its function is as follows. Redox regulated molecular chaperone. Protects both thermally unfolding and oxidatively damaged proteins from irreversible aggregation. Plays an important role in the bacterial defense system toward oxidative stress. This is 33 kDa chaperonin from Streptococcus equi subsp. equi (strain 4047).